We begin with the raw amino-acid sequence, 978 residues long: Regulator of telomere elongation helicase 1 homolog (978 aa).

The region spanning 7–318 (NGIPVNFPFE…EDDDAKKDFT (312 aa)) is the Helicase ATP-binding domain. 42 to 49 (SPTGTGKT) is a binding site for ATP. Positions 159, 177, 186, and 222 each coordinate [4Fe-4S] cluster. Positions 265–268 (DEAH) match the DEAH box motif.

Belongs to the helicase family. RAD3/XPD subfamily.

The protein localises to the nucleus. It carries out the reaction ATP + H2O = ADP + phosphate + H(+). Its function is as follows. A probable ATP-dependent DNA helicase implicated in DNA repair and the maintenance of genomic stability. Acts as an anti-recombinase to counteract toxic recombination and limit crossover during meiosis. Regulates meiotic recombination and crossover homeostasis by physically dissociating strand invasion events and thereby promotes noncrossover repair by meiotic synthesis dependent strand annealing (SDSA) as well as disassembly of D loop recombination intermediates. The sequence is that of Regulator of telomere elongation helicase 1 homolog from Culex quinquefasciatus (Southern house mosquito).